Reading from the N-terminus, the 94-residue chain is uncharacterized protein (94 aa).

This is an uncharacterized protein from Saccharomyces cerevisiae (strain ATCC 204508 / S288c) (Baker's yeast).